The following is a 510-amino-acid chain: MVFSRFFRVTGVNLSRRVYSRISSSSSPSLESIPWIHKASNFTLYGSFHASSVETQVSANDASQDAERICKILTKFTDSKVETLLNEASVKLSPALIEEVLKKLSNAGVLALSVFKWAENQKGFKHTTSNYNALIESLGKIKQFKLIWSLVDDMKAKKLLSKETFALISRRYARARKVKEAIGAFHKMEEFGFKMESSDFNRMLDTLSKSRNVGDAQKVFDKMKKKRFEPDIKSYTILLEGWGQELNLLRVDEVNREMKDEGFEPDVVAYGIIINAHCKAKKYEEAIRFFNEMEQRNCKPSPHIFCSLINGLGSEKKLNDALEFFERSKSSGFPLEAPTYNALVGAYCWSQRMEDAYKTVDEMRLKGVGPNARTYDIILHHLIRMQRSKEAYEVYQTMSCEPTVSTYEIMVRMFCNKERLDMAIKIWDEMKGKGVLPGMHMFSSLITALCHENKLDEACEYFNEMLDVGIRPPGHMFSRLKQTLLDEGRKDKVTDLVVKMDRLRKTQLVG.

A mitochondrion-targeting transit peptide spans 1–14; the sequence is MVFSRFFRVTGVNL. PPR repeat units lie at residues 127–157, 161–195, 196–230, 231–265, 266–300, 301–335, 336–370, 371–401, 403–437, and 438–472; these read TTSN…MKAK, SKET…GFKM, ESSD…RFEP, DIKS…GFEP, DVVA…NCKP, SPHI…GFPL, EAPT…GVGP, NART…MSCE, TVST…GVLP, and GMHM…GIRP.

Belongs to the PPR family. P subfamily.

It localises to the mitochondrion. The polypeptide is Pentatricopeptide repeat-containing protein At1g71060, mitochondrial (Arabidopsis thaliana (Mouse-ear cress)).